Here is a 74-residue protein sequence, read N- to C-terminus: Mitochondrial import receptor subunit TOM6 homolog (74 aa).

Positions 1–16 are enriched in polar residues; the sequence is MASSTVPVSAAGSANE. Residues 1-22 are disordered; the sequence is MASSTVPVSAAGSANETPEIPD. At Ala2 the chain carries N-acetylalanine.

The protein belongs to the Tom6 family. Forms part of the preprotein translocase complex of the outer mitochondrial membrane (TOM complex) which consists of at least 7 different proteins (TOMM5, TOMM6, TOMM7, TOMM20, TOMM22, TOMM40 and TOMM70).

It is found in the mitochondrion outer membrane. The sequence is that of Mitochondrial import receptor subunit TOM6 homolog (TOMM6) from Homo sapiens (Human).